The primary structure comprises 180 residues: Stathmin-3 (180 aa).

Residues Cys22 and Cys24 are each lipidated (S-palmitoyl cysteine). The region spanning 38-180 is the SLD domain; sequence GDMEVKQLDK…NKEQREEMSG (143 aa). Residues Ser50, Ser60, Ser65, Ser68, Ser72, Ser73, and Ser81 each carry the phosphoserine modification. The disordered stretch occupies residues 58–81; that stretch reads LKSPSDLSPESPVLSSPPKRKDAS. A compositionally biased stretch (low complexity) spans 60-74; sequence SPSDLSPESPVLSSP. Positions 75–179 form a coiled coil; that stretch reads PKRKDASLEE…RNKEQREEMS (105 aa).

This sequence belongs to the stathmin family. Interacts with STAT3. Interacts with CLU (secreted form); this interaction may act as an important modulator during neuronal differentiation. Post-translationally, N-terminal palmitoylation promotes specific anchoring to the cytosolic leaflet of Golgi membranes and subsequent vesicular trafficking along dendrites and axons. Neuronal Stathmins are substrates for palmitoyltransferases ZDHHC3, ZDHHC7 and ZDHHC15. Neuron specific.

Its subcellular location is the golgi apparatus. It localises to the cell projection. It is found in the growth cone. The protein localises to the axon. The protein resides in the cytoplasm. Its subcellular location is the cytosol. Exhibits microtubule-destabilizing activity, which is antagonized by STAT3. This Rattus norvegicus (Rat) protein is Stathmin-3 (Stmn3).